The sequence spans 538 residues: MAENLKRLVSNETLRTLQEKLDFWLKEYNTNTCDQNLNHCLELIEQVAKVQGQLFGILTAAAQEGGRNDGVETIKSRLLPWLEASFTAASLGKSVDSKVPSLQDTFDRERHKDPSPRDRDMQQLDSNLNSTRSQCNQVQDDLVETEKNLEESKNRSAISLLAAEEEINQLKKQLKSLQAQEDARHRNTDQRSSENRRSEPWSLEERKREQWNSLKQNADQQDTEAMSDYKKQLRNLKEEIAVLSAEKSALQGRSSRSRSPSPAPRSRSCSRSRSASPSTAVKVRRPSPNRSKLSNVARKAALLSRFSDSYSQARLDAQCLLRRCIDKAETVQRIIYIATVEAFHVAKMAFRHFKIHVRKSLTPSYVGSNDFENAVLDYVICHLDLYDSQSSVNDVIRAMNVNPKISFPPVVDFCLLSDFIQEICCIAFAMQALEPPLDIAYGADGEVFNDCKYRRSYDSDFTAPLVLYHVWPALMENDCVIMKGEAVTRRGAFWNSVRSVSRCRSRSLSPICPRSQIGLNTMSRSRSPSPIRCGLPRF.

The interaction with YWHAG/14-3-3 protein gamma stretch occupies residues 1–273 (MAENLKRLVS…PRSRSCSRSR (273 aa)). The residue at position 85 (S85) is a Phosphoserine. The segment at 97–137 (SKVPSLQDTFDRERHKDPSPRDRDMQQLDSNLNSTRSQCNQ) is disordered. Residues 105–122 (TFDRERHKDPSPRDRDMQ) are compositionally biased toward basic and acidic residues. Coiled-coil stretches lie at residues 118 to 187 (DRDM…RHRN) and 219 to 256 (DQQD…RSSR). The span at 123-137 (QLDSNLNSTRSQCNQ) shows a compositional bias: polar residues. A phosphoserine mark is found at S156 and S159. 2 disordered regions span residues 173–226 (QLKS…TEAM) and 247–294 (KSAL…SKLS). Residues 181 to 210 (EDARHRNTDQRSSENRRSEPWSLEERKREQ) are compositionally biased toward basic and acidic residues. A compositionally biased stretch (polar residues) spans 211-224 (WNSLKQNADQQDTE). Low complexity predominate over residues 253 to 278 (RSSRSRSPSPAPRSRSCSRSRSASPS). Phosphoserine occurs at positions 287 and 509.

Belongs to the MIEAP family. As to quaternary structure, interacts (via coiled-coil domains) with BNIP3L (via BH3 domain). Interacts (via coiled-coil domains) with BNIP3 (via BH3 domain). Interacts with YWHAG/14-3-3 protein gamma; a protein that also plays a role in MALM.

It localises to the cytoplasm. It is found in the cytosol. The protein resides in the mitochondrion outer membrane. The protein localises to the mitochondrion matrix. Functionally, key regulator of mitochondrial quality that mediates the repairing or degradation of unhealthy mitochondria in response to mitochondrial damage. Mediator of mitochondrial protein catabolic process (also named MALM) by mediating the degradation of damaged proteins inside mitochondria by promoting the accumulation in the mitochondrial matrix of hydrolases that are characteristic of the lysosomal lumen. Also involved in mitochondrion degradation of damaged mitochondria by promoting the formation of vacuole-like structures (named MIV), which engulf and degrade unhealthy mitochondria by accumulating lysosomes. The physical interaction of SPATA18/MIEAP, BNIP3 and BNIP3L/NIX at the mitochondrial outer membrane regulates the opening of a pore in the mitochondrial double membrane in order to mediate the translocation of lysosomal proteins from the cytoplasm to the mitochondrial matrix. Binds cardiolipin. May form molecular condensates (non-membrane-bounded organelles) within mitochondria that compartmentalize and promote cardiolipin metabolism. This Homo sapiens (Human) protein is Mitochondria-eating protein (SPATA18).